The chain runs to 236 residues: Concanavalin-Ma (236 aa).

Positions 8 and 10 each coordinate Mn(2+). 4 residues coordinate Ca(2+): Asp10, Tyr12, Asn14, and Asp19. Tyr12 provides a ligand contact to a carbohydrate. 2 residues coordinate Mn(2+): Asp19 and His24. 98 to 99 contributes to the a carbohydrate binding site; that stretch reads LY. A Ca(2+)-binding site is contributed by Asp207. Arg227 contacts a carbohydrate.

This sequence belongs to the leguminous lectin family. In terms of assembly, homotetramer.

Its function is as follows. Glucose/D-mannose specific lectin. This is Concanavalin-Ma from Canavalia rosea (Beach bean).